The sequence spans 230 residues: Ubiquitin carboxyl-terminal hydrolase isozyme L3 (230 aa).

The 225-residue stretch at 5-229 folds into the UCH catalytic domain; that stretch reads RWLPLEANPE…LRFNAIALSA (225 aa). The interaction with ubiquitin stretch occupies residues 8 to 13; the sequence is PLEANP. Residue cysteine 95 is the Nucleophile of the active site. A Phosphoserine modification is found at serine 130. The tract at residues 152-159 is interaction with ubiquitin. Crossover loop which restricts access of large ubiquitin adducts to the active site; that stretch reads AHEGQTEA. Residue histidine 169 is the Proton donor of the active site. An interaction with ubiquitin region spans residues 219–224; sequence ELRFNA.

This sequence belongs to the peptidase C12 family. In terms of assembly, preferentially binds diubiquitin; the interaction does not hydrolyze diubiquitin but, in vitro, inhibits the hydrolyzing activity on other substrates. Ubiquitously expressed, with highest levels in brain, liver, heart, thymus, kidney and testis. Highly expressed in the cauda epididymidis, in meiotic pachytene spermatocytes and post-meiotic spematids. In the retina, enriched in the photoreceptor inner segment.

It localises to the cytoplasm. It catalyses the reaction Thiol-dependent hydrolysis of ester, thioester, amide, peptide and isopeptide bonds formed by the C-terminal Gly of ubiquitin (a 76-residue protein attached to proteins as an intracellular targeting signal).. Inhibited by monoubiquitin and diubiquitin. In terms of biological role, deubiquitinating enzyme (DUB) that controls levels of cellular ubiquitin through processing of ubiquitin precursors and ubiquitinated proteins. Thiol protease that recognizes and hydrolyzes a peptide bond at the C-terminal glycine of either ubiquitin or NEDD8. Has a 10-fold preference for Arg and Lys at position P3'', and exhibits a preference towards 'Lys-48'-linked ubiquitin chains. Deubiquitinates ENAC in apical compartments, thereby regulating apical membrane recycling. Indirectly increases the phosphorylation of IGFIR, AKT and FOXO1 and promotes insulin-signaling and insulin-induced adipogenesis. Required for stress-response retinal, skeletal muscle and germ cell maintenance. May be involved in working memory. Can hydrolyze UBB(+1), a mutated form of ubiquitin which is not effectively degraded by the proteasome. The sequence is that of Ubiquitin carboxyl-terminal hydrolase isozyme L3 (Uchl3) from Mus musculus (Mouse).